The chain runs to 331 residues: Spondin-2 (331 aa).

The signal sequence occupies residues 1–26 (MENPSPAAALGKALCALLLATLGAAG). Residues 31–221 (GESICSARAL…EITSSSPSHP (191 aa)) enclose the Spondin domain. Cys-35 and Cys-171 are joined by a disulfide. Position 141 (Glu-141) interacts with a divalent metal cation. The Ca(2+) site is built by Asp-160, Asp-188, and Asp-192. In terms of domain architecture, TSP type-1 spans 277–331 (DCEVSLWSSWGLCGGHCGRLGTKSRTRYVRVQPANNGSPCPELEEEAECVPDNCV). A glycan (C-linked (Man) tryptophan) is linked at Trp-283.

In terms of assembly, monomer. Interacts with integrin. In terms of tissue distribution, expressed in normal lung tissue but not in lung carcinoma cell lines.

Its subcellular location is the secreted. The protein resides in the extracellular space. It localises to the extracellular matrix. In terms of biological role, cell adhesion protein that promotes adhesion and outgrowth of hippocampal embryonic neurons. Binds directly to bacteria and their components and functions as an opsonin for macrophage phagocytosis of bacteria. Essential in the initiation of the innate immune response and represents a unique pattern-recognition molecule in the ECM for microbial pathogens. Binds bacterial lipopolysaccharide (LPS). This Homo sapiens (Human) protein is Spondin-2 (SPON2).